The primary structure comprises 892 residues: MELKEKAKVVITVASLVAVTILFVTEYRRRRQRRKQTSSLSSCYLHSELKPQFGFKRVLADNSYSEFKHLKLVDASSSSLEKPSNGHPYETEITVLLENPQIEFGFLRGECSLEMSDSYVWVETESQLKELAEILAKEQVFAVDTEQHSLRSFLGFTALIQISTHEEDFLVDTIALHDVMSILRPVFSDPNICKVFHGADNDVIWLQRDFHIYVVNMFDTAKACEVLSKPQRSLAYLLETVCGVATNKLLQREDWRQRPLSEEMVRYARTDAHYLLYIADSLTTELKQLATEDSSSPDDRFHFLLEASRRSNMTCLQLYTKETEDFPGSAASSSIIYRHLNGHGDKSNISLNAEELVRKLCAWRDLMGRIHDESTRYVLSDQAIVGLSCKQPTTTEEIYDTIAHIDLATESSPSLSSSVQSPYPVICSHLDDIYKMILDKLAKLDDLLPVVLKKCLGTNGTCPISVFNYSLLVNFKTKLSSHSAPKQNGHKNFKQQFTRKASRELFVKKFSCKAPVYHNCRIYANDGRLLCYCDKRKLEWYLNRGLAKLVEENPPAIMLLFEPKGRPEDEGNDFYIQTKRNICVGCGEGKHYLRYRIIPSCYRVHFPEHLKSHRSHDIVLLCVDCHEVAHAAAERYKKQIATEFGIPLFVRRVLDSKEAQGTSSLVEDESTGDSEDAGVSPLHLRSAAMALLRHGNRMPSSRREELLQTVKMYYGGRDLSEEDLEKALLIGLSPHERRKLERKKGVSFKHSAEVAGMDKQEDENNDGEALADFEKIMTVERSTVVDDSGDGTSEGDGAKELNDTQCNGNTLHQQNSKLSLLGHGPHGKQIVEYLLREHGEDGVRDFCQRWRKVFVDAVHPRHLPGGWNVSHSGRRDFGEFSVYNPTKRLSTE.

The region spanning 119–287 is the 3'-5' exonuclease domain; sequence YVWVETESQL…IADSLTTELK (169 aa). Positions 350 to 436 constitute an HRDC domain; sequence SLNAEELVRK…CSHLDDIYKM (87 aa). The tract at residues 785–811 is disordered; sequence VDDSGDGTSEGDGAKELNDTQCNGNTL.

It localises to the cytoplasm. It is found in the cytosol. This Arabidopsis thaliana (Mouse-ear cress) protein is Protein RRP6-like 3.